The chain runs to 171 residues: Putative MucR family transcriptional regulatory protein y4pD (171 aa).

The protein belongs to the ros/MucR family.

This chain is Putative MucR family transcriptional regulatory protein y4pD, found in Sinorhizobium fredii (strain NBRC 101917 / NGR234).